A 145-amino-acid chain; its full sequence is 3-dehydroquinate dehydratase (145 aa).

Tyr-22 serves as the catalytic Proton acceptor. The substrate site is built by Asn-71, His-77, and Asp-84. Catalysis depends on His-97, which acts as the Proton donor. Substrate contacts are provided by residues 98-99 (IS) and Arg-108.

The protein belongs to the type-II 3-dehydroquinase family. As to quaternary structure, homododecamer.

It carries out the reaction 3-dehydroquinate = 3-dehydroshikimate + H2O. Its pathway is metabolic intermediate biosynthesis; chorismate biosynthesis; chorismate from D-erythrose 4-phosphate and phosphoenolpyruvate: step 3/7. In terms of biological role, catalyzes a trans-dehydration via an enolate intermediate. This Thermotoga neapolitana (strain ATCC 49049 / DSM 4359 / NBRC 107923 / NS-E) protein is 3-dehydroquinate dehydratase.